The primary structure comprises 279 residues: Dermonecrotic toxin LspiSicTox-betaIE3ii (279 aa).

Residue histidine 5 is part of the active site. Mg(2+) contacts are provided by glutamate 25 and aspartate 27. The Nucleophile role is filled by histidine 41. 2 disulfide bridges follow: cysteine 45-cysteine 51 and cysteine 47-cysteine 190. Mg(2+) is bound at residue aspartate 85.

This sequence belongs to the arthropod phospholipase D family. Class II subfamily. Requires Mg(2+) as cofactor. In terms of tissue distribution, expressed by the venom gland.

The protein resides in the secreted. It catalyses the reaction an N-(acyl)-sphingosylphosphocholine = an N-(acyl)-sphingosyl-1,3-cyclic phosphate + choline. The enzyme catalyses an N-(acyl)-sphingosylphosphoethanolamine = an N-(acyl)-sphingosyl-1,3-cyclic phosphate + ethanolamine. It carries out the reaction a 1-acyl-sn-glycero-3-phosphocholine = a 1-acyl-sn-glycero-2,3-cyclic phosphate + choline. The catalysed reaction is a 1-acyl-sn-glycero-3-phosphoethanolamine = a 1-acyl-sn-glycero-2,3-cyclic phosphate + ethanolamine. Functionally, dermonecrotic toxins cleave the phosphodiester linkage between the phosphate and headgroup of certain phospholipids (sphingolipid and lysolipid substrates), forming an alcohol (often choline) and a cyclic phosphate. This toxin acts on sphingomyelin (SM). It may also act on ceramide phosphoethanolamine (CPE), lysophosphatidylcholine (LPC) and lysophosphatidylethanolamine (LPE), but not on lysophosphatidylserine (LPS), and lysophosphatidylglycerol (LPG). It acts by transphosphatidylation, releasing exclusively cyclic phosphate products as second products. Induces dermonecrosis, hemolysis, increased vascular permeability, edema, inflammatory response, and platelet aggregation. In Loxosceles spinulosa (Recluse spider), this protein is Dermonecrotic toxin LspiSicTox-betaIE3ii.